We begin with the raw amino-acid sequence, 81 residues long: Costars family protein ABRACL (81 aa).

This sequence belongs to the costars family.

This Salmo salar (Atlantic salmon) protein is Costars family protein ABRACL.